Reading from the N-terminus, the 218-residue chain is Adenylate kinase (218 aa).

10 to 15 provides a ligand contact to ATP; that stretch reads GAGKGT. An NMP region spans residues 30-59; that stretch reads STGDMLRAAVKAATPLGLAAKKIMDEGGLV. Residues Thr-31, Arg-36, 57–59, 85–88, and Gln-92 contribute to the AMP site; these read GLV and GFPR. Residues 122–159 form an LID region; sequence GRRVHLASGRTYHVTFNPPAVPDKDDLTGEPLVQRNDD. ATP-binding positions include Arg-123 and 132–133; that span reads TY. AMP contacts are provided by Arg-156 and Arg-167. Residue Gly-203 coordinates ATP.

It belongs to the adenylate kinase family. In terms of assembly, monomer.

The protein localises to the cytoplasm. It carries out the reaction AMP + ATP = 2 ADP. It participates in purine metabolism; AMP biosynthesis via salvage pathway; AMP from ADP: step 1/1. Functionally, catalyzes the reversible transfer of the terminal phosphate group between ATP and AMP. Plays an important role in cellular energy homeostasis and in adenine nucleotide metabolism. The polypeptide is Adenylate kinase (Chlorobaculum tepidum (strain ATCC 49652 / DSM 12025 / NBRC 103806 / TLS) (Chlorobium tepidum)).